The sequence spans 351 residues: Histidinol-phosphate aminotransferase (351 aa).

An N6-(pyridoxal phosphate)lysine modification is found at Lys214.

This sequence belongs to the class-II pyridoxal-phosphate-dependent aminotransferase family. Histidinol-phosphate aminotransferase subfamily. The cofactor is pyridoxal 5'-phosphate.

The catalysed reaction is L-histidinol phosphate + 2-oxoglutarate = 3-(imidazol-4-yl)-2-oxopropyl phosphate + L-glutamate. It participates in amino-acid biosynthesis; L-histidine biosynthesis; L-histidine from 5-phospho-alpha-D-ribose 1-diphosphate: step 7/9. This is Histidinol-phosphate aminotransferase from Methanosphaerula palustris (strain ATCC BAA-1556 / DSM 19958 / E1-9c).